A 258-amino-acid polypeptide reads, in one-letter code: Imidazole glycerol phosphate synthase subunit HisF (258 aa).

Active-site residues include aspartate 11 and aspartate 130.

The protein belongs to the HisA/HisF family. In terms of assembly, heterodimer of HisH and HisF.

It is found in the cytoplasm. It catalyses the reaction 5-[(5-phospho-1-deoxy-D-ribulos-1-ylimino)methylamino]-1-(5-phospho-beta-D-ribosyl)imidazole-4-carboxamide + L-glutamine = D-erythro-1-(imidazol-4-yl)glycerol 3-phosphate + 5-amino-1-(5-phospho-beta-D-ribosyl)imidazole-4-carboxamide + L-glutamate + H(+). The protein operates within amino-acid biosynthesis; L-histidine biosynthesis; L-histidine from 5-phospho-alpha-D-ribose 1-diphosphate: step 5/9. Functionally, IGPS catalyzes the conversion of PRFAR and glutamine to IGP, AICAR and glutamate. The HisF subunit catalyzes the cyclization activity that produces IGP and AICAR from PRFAR using the ammonia provided by the HisH subunit. This Escherichia coli O1:K1 / APEC protein is Imidazole glycerol phosphate synthase subunit HisF.